A 200-amino-acid chain; its full sequence is dITP/XTP pyrophosphatase (200 aa).

Residue 8–13 (TGNQGK) coordinates substrate. Asp69 functions as the Proton acceptor in the catalytic mechanism. Asp69 serves as a coordination point for Mg(2+). Substrate contacts are provided by residues Ser70, 154 to 157 (FGYD), Lys177, and 182 to 183 (HR).

The protein belongs to the HAM1 NTPase family. In terms of assembly, homodimer. Requires Mg(2+) as cofactor.

It catalyses the reaction XTP + H2O = XMP + diphosphate + H(+). The catalysed reaction is dITP + H2O = dIMP + diphosphate + H(+). The enzyme catalyses ITP + H2O = IMP + diphosphate + H(+). Its function is as follows. Pyrophosphatase that catalyzes the hydrolysis of nucleoside triphosphates to their monophosphate derivatives, with a high preference for the non-canonical purine nucleotides XTP (xanthosine triphosphate), dITP (deoxyinosine triphosphate) and ITP. Seems to function as a house-cleaning enzyme that removes non-canonical purine nucleotides from the nucleotide pool, thus preventing their incorporation into DNA/RNA and avoiding chromosomal lesions. The polypeptide is dITP/XTP pyrophosphatase (Vibrio vulnificus (strain CMCP6)).